A 491-amino-acid chain; its full sequence is N-succinylglutamate 5-semialdehyde dehydrogenase (491 aa).

Position 225-230 (225-230 (GSSTVG)) interacts with NAD(+). Residues E248 and C282 contribute to the active site.

The protein belongs to the aldehyde dehydrogenase family. AstD subfamily.

It catalyses the reaction N-succinyl-L-glutamate 5-semialdehyde + NAD(+) + H2O = N-succinyl-L-glutamate + NADH + 2 H(+). It participates in amino-acid degradation; L-arginine degradation via AST pathway; L-glutamate and succinate from L-arginine: step 4/5. Functionally, catalyzes the NAD-dependent reduction of succinylglutamate semialdehyde into succinylglutamate. In Marinobacter nauticus (strain ATCC 700491 / DSM 11845 / VT8) (Marinobacter aquaeolei), this protein is N-succinylglutamate 5-semialdehyde dehydrogenase.